Here is a 431-residue protein sequence, read N- to C-terminus: Glucose-1-phosphate adenylyltransferase (431 aa).

Residue lysine 39 participates in beta-D-fructose 1,6-bisphosphate binding. Residues arginine 40, histidine 46, and arginine 52 each coordinate AMP. Tyrosine 114 is a binding site for alpha-D-glucose 1-phosphate. AMP is bound at residue arginine 130. Residues glycine 179, 194-195 (EK), and serine 212 each bind alpha-D-glucose 1-phosphate. 2 residues coordinate AMP: glutamate 370 and arginine 386. Beta-D-fructose 1,6-bisphosphate-binding positions include 419-423 (REMLR) and 429-431 (QER).

It belongs to the bacterial/plant glucose-1-phosphate adenylyltransferase family. Homotetramer.

It catalyses the reaction alpha-D-glucose 1-phosphate + ATP + H(+) = ADP-alpha-D-glucose + diphosphate. The protein operates within glycan biosynthesis; glycogen biosynthesis. With respect to regulation, allosterically activated by fructose-1,6-bisphosphate (F16BP) and inhibited by AMP. Involved in the biosynthesis of ADP-glucose, a building block required for the elongation reactions to produce glycogen. Catalyzes the reaction between ATP and alpha-D-glucose 1-phosphate (G1P) to produce pyrophosphate and ADP-Glc. This is Glucose-1-phosphate adenylyltransferase from Escherichia fergusonii (strain ATCC 35469 / DSM 13698 / CCUG 18766 / IAM 14443 / JCM 21226 / LMG 7866 / NBRC 102419 / NCTC 12128 / CDC 0568-73).